A 288-amino-acid polypeptide reads, in one-letter code: DegV domain-containing protein SAS0714 (288 aa).

Residues 3–282 (IAVMTDSTSY…SGGLGLGYVG (280 aa)) enclose the DegV domain. Hexadecanoate is bound by residues Thr-62 and Ser-95.

Functionally, may bind long-chain fatty acids, such as palmitate, and may play a role in lipid transport or fatty acid metabolism. This is DegV domain-containing protein SAS0714 from Staphylococcus aureus (strain MSSA476).